A 410-amino-acid polypeptide reads, in one-letter code: MSLPESPHSPATLDYALEDPHQGQRSREKSKATEVMADMFDGRLEPIVFPPPRLPEEGVAPQDPADGGHTFHILVDAGRSHGAIKAGQEVTPPPAEGLEAASASLTTDGSLKNGFPGEETHGLGGEKALETCGAGRSESEVIAEGKAEDVKPEECAMFSAPVDEKPGGEEMDVAEENRAIDEVNREAGPGPGPGPLNVGLHLNPLESIQLELDSVNAEADRALLQVERRFGQIHEYYLEQRNDIIRNIPGFWVTAFRHHPQLSAMIRGQDAEMLSYLTNLEVKELRHPRTGCKFKFFFQRNPYFRNKLIVKVYEVRSFGQVVSFSTLIMWRRGHGPQSFIHRNRHVICSFFTWFSDHSLPESDRIAQIIKEDLWSNPLQYYLLGEDAHRARRRLVREPVEIPRPFGFQCG.

2 disordered regions span residues 1–31 (MSLP…EKSK) and 46–69 (PIVF…DGGH). Phosphoserine is present on Ser-9. A compositionally biased stretch (basic and acidic residues) spans 18–31 (EDPHQGQRSREKSK).

It belongs to the nucleosome assembly protein (NAP) family.

The protein is Testis-specific Y-encoded-like protein 6 (TSPYL6) of Homo sapiens (Human).